A 101-amino-acid polypeptide reads, in one-letter code: Cilia- and flagella-associated protein 141 (101 aa).

In terms of assembly, microtubule inner protein component of sperm flagellar doublet microtubules. In terms of tissue distribution, expressed in airway epithelial cells.

It is found in the cytoplasm. The protein localises to the cytoskeleton. It localises to the cilium axoneme. The protein resides in the flagellum axoneme. Functionally, microtubule inner protein (MIP) part of the dynein-decorated doublet microtubules (DMTs) in cilia axoneme, which is required for motile cilia beating. The chain is Cilia- and flagella-associated protein 141 from Homo sapiens (Human).